The primary structure comprises 336 residues: F420-dependent glucose-6-phosphate dehydrogenase (336 aa).

Asp-39 contributes to the coenzyme F420-(gamma-Glu)n binding site. Residue His-40 is the Proton donor of the active site. Coenzyme F420-(gamma-Glu)n contacts are provided by residues Thr-76 and 107–108; that span reads TG. Glu-109 functions as the Proton acceptor in the catalytic mechanism. Residues Asn-112, 177 to 178, and 180 to 181 each bind coenzyme F420-(gamma-Glu)n; these read GG and QV. Thr-195, Lys-198, Lys-259, and Arg-283 together coordinate substrate.

Belongs to the F420-dependent glucose-6-phosphate dehydrogenase family. As to quaternary structure, homodimer.

The enzyme catalyses oxidized coenzyme F420-(gamma-L-Glu)(n) + D-glucose 6-phosphate + H(+) = 6-phospho-D-glucono-1,5-lactone + reduced coenzyme F420-(gamma-L-Glu)(n). Functionally, catalyzes the coenzyme F420-dependent oxidation of glucose 6-phosphate (G6P) to 6-phosphogluconolactone. Appears to have a role in resistance to oxidative stress, via its consumption of G6P that serves as a source of reducing power to combat oxidative stress in mycobacteria. This is F420-dependent glucose-6-phosphate dehydrogenase from Mycolicibacterium gilvum (strain PYR-GCK) (Mycobacterium gilvum (strain PYR-GCK)).